The primary structure comprises 719 residues: DNA polymerase epsilon subunit B (719 aa).

Residues Ser107–Ile147 form a disordered region.

This sequence belongs to the DNA polymerase epsilon subunit B family. In terms of assembly, heterotetramer. Consists of four subunits: POL2, DPB2, DPB3 and DPB4.

The protein localises to the nucleus. As accessory component of the DNA polymerase epsilon (DNA polymerase II) participates in chromosomal DNA replication. The polypeptide is DNA polymerase epsilon subunit B (DPB2) (Candida glabrata (strain ATCC 2001 / BCRC 20586 / JCM 3761 / NBRC 0622 / NRRL Y-65 / CBS 138) (Yeast)).